Consider the following 118-residue polypeptide: Small ribosomal subunit protein uS13 (118 aa).

The interval 94-118 is disordered; it reads GLPVRGQRTKTNARTRKGPRKPIKK.

It belongs to the universal ribosomal protein uS13 family. Part of the 30S ribosomal subunit. Forms a loose heterodimer with protein S19. Forms two bridges to the 50S subunit in the 70S ribosome.

In terms of biological role, located at the top of the head of the 30S subunit, it contacts several helices of the 16S rRNA. In the 70S ribosome it contacts the 23S rRNA (bridge B1a) and protein L5 of the 50S subunit (bridge B1b), connecting the 2 subunits; these bridges are implicated in subunit movement. Contacts the tRNAs in the A and P-sites. This is Small ribosomal subunit protein uS13 from Salmonella paratyphi A (strain ATCC 9150 / SARB42).